We begin with the raw amino-acid sequence, 87 residues long: Small ribosomal subunit protein bS20 (87 aa).

The interval 1–24 (MANTAQARKRARQSVERNKHNSSL) is disordered.

It belongs to the bacterial ribosomal protein bS20 family.

In terms of biological role, binds directly to 16S ribosomal RNA. In Bordetella avium (strain 197N), this protein is Small ribosomal subunit protein bS20.